Reading from the N-terminus, the 211-residue chain is Protein YCF54, chloroplastic (211 aa).

The N-terminal 80 residues, 1–80 (MWSVTGALTV…GESTKYHFLV (80 aa)), are a transit peptide targeting the chloroplast.

It belongs to the ycf54 family. As to quaternary structure, interacts with LFNR1 and CRD1/CHL27 in chloroplasts.

It is found in the plastid. The protein resides in the chloroplast. Its function is as follows. Involved in the biosynthesis of chlorophyll; acts probably as a scaffolding factor in the MgProto monomethylester (MgProtoME) cyclase complex to stabilize CRD1/CHL27, the catalytic subunit which catalyzes the formation of a fifth isocyclic ring to tetrapyrroles to form protochlorophyllide. This chain is Protein YCF54, chloroplastic, found in Arabidopsis thaliana (Mouse-ear cress).